The sequence spans 612 residues: UvrABC system protein C (612 aa).

One can recognise a GIY-YIG domain in the interval 21–99 (KLPGVYQMYD…IKSQKPPFNI (79 aa)). Residues 209-244 (EVLQQELQVEMEQASQALDFERAVVVRDQITDLRQV) enclose the UVR domain.

This sequence belongs to the UvrC family. As to quaternary structure, interacts with UvrB in an incision complex.

Its subcellular location is the cytoplasm. The UvrABC repair system catalyzes the recognition and processing of DNA lesions. UvrC both incises the 5' and 3' sides of the lesion. The N-terminal half is responsible for the 3' incision and the C-terminal half is responsible for the 5' incision. In Saccharophagus degradans (strain 2-40 / ATCC 43961 / DSM 17024), this protein is UvrABC system protein C.